Consider the following 214-residue polypeptide: Ubiquitin carboxyl-terminal hydrolase (214 aa).

One can recognise a UCH catalytic domain in the interval 6-214 (RWIPLESNPK…KKFMARDPEI (209 aa)). The active-site Nucleophile is Cys90. The active-site Proton donor is His164.

Belongs to the peptidase C12 family.

The protein resides in the cytoplasm. It carries out the reaction Thiol-dependent hydrolysis of ester, thioester, amide, peptide and isopeptide bonds formed by the C-terminal Gly of ubiquitin (a 76-residue protein attached to proteins as an intracellular targeting signal).. Functionally, ubiquitin-protein hydrolase is involved both in the processing of ubiquitin precursors and of ubiquitinated proteins. This enzyme is a thiol protease that recognizes and hydrolyzes a peptide bond at the C-terminal glycine of ubiquitin. The protein is Ubiquitin carboxyl-terminal hydrolase (UCH) of Aplysia californica (California sea hare).